A 306-amino-acid polypeptide reads, in one-letter code: Mitochondrial substrate carrier family protein ucpA (306 aa).

Topologically, residues 1–15 are mitochondrial intermembrane; that stretch reads MSVNLNNNKNNKNKV. Solcar repeat units lie at residues 13 to 103, 112 to 204, and 211 to 301; these read NKVA…ISNA, YFFL…CKNL, and DGIY…FKKL. The helical transmembrane segment at 16 to 36 threads the bilayer; it reads AIGFISGSLASICATTVTNPI. Residues 37 to 83 are Mitochondrial matrix-facing; that stretch reads ELVKTRLQLQGELQLSQRIYNGVWDAFKQIYKTEGIRGLQSGLIPAY. A helical transmembrane segment spans residues 84 to 103; sequence FSQATMQGIRLGSFDLISNA. The Mitochondrial intermembrane portion of the chain corresponds to 104 to 117; the sequence is LGAKPNQDYFFLKN. A helical transmembrane segment spans residues 118 to 138; that stretch reads LLAGATAGAIGAAAGSPFDLV. Topologically, residues 139 to 174 are mitochondrial matrix; that stretch reads KVRMQAANMYKNDPQFVGYSSSFAAFKQIIQKEGFK. The chain crosses the membrane as a helical span at residues 175–195; it reads GLTRGMLTSAQRTAVGSAIQL. Over 196–211 the chain is Mitochondrial intermembrane; sequence STYGSCKNLVLNFVDD. Residues 212 to 232 traverse the membrane as a helical segment; the sequence is GIYAYIISSMVAGFIVTFGMN. The Mitochondrial matrix portion of the chain corresponds to 233-276; it reads PFDVARTRLYFQGKGNSHGEIYKGLMDCVYKTVKKEGFGAVYKG. A helical transmembrane segment spans residues 277–295; the sequence is FWAHYLRLGPHTILTLVFW. Residues 296-306 are Mitochondrial intermembrane-facing; sequence EQFKKLFSGEL.

It belongs to the mitochondrial carrier (TC 2.A.29) family.

It localises to the mitochondrion inner membrane. In terms of biological role, mitochondrial solute carriers shuttle metabolites, nucleotides, and cofactors through the mitochondrial inner membrane. Transports oxaloacetate and sulfate. This is Mitochondrial substrate carrier family protein ucpA (ucpA) from Dictyostelium discoideum (Social amoeba).